Here is a 627-residue protein sequence, read N- to C-terminus: Siderophore iron transporter ARN1 (627 aa).

Residues 1–70 are Extracellular-facing; it reads MESVHSRDPV…TEIIGSAYNK (70 aa). Residues 71 to 91 traverse the membrane as a helical segment; that stretch reads WYLQAILLLSAFICGYGYGLD. The Cytoplasmic portion of the chain corresponds to 92–110; it reads GNIRYIYTGYATSSYSEHS. Residues 111-131 traverse the membrane as a helical segment; the sequence is LLSTINVINAVVSAASQIIYA. At 132–135 the chain is on the extracellular side; it reads RLSD. Residues 136-156 traverse the membrane as a helical segment; that stretch reads VFGRLYLFISAVILYVVGTII. At 157–167 the chain is on the cytoplasmic side; it reads QSQAYDVQRYA. The helical transmembrane segment at 168-188 threads the bilayer; the sequence is AGAIFYNAGYVGVILILLIIL. At 189 to 197 the chain is on the extracellular side; the sequence is SDFSSLKWR. The helical transmembrane segment at 198 to 218 threads the bilayer; that stretch reads LLYQFVPTWPFIINTWIAGNI. Residues 219–231 lie on the Cytoplasmic side of the membrane; the sequence is TSRANPVVNWSWD. Residues 232-252 form a helical membrane-spanning segment; it reads VGMWAFIFPLSCVPIVLCMLH. Residues 253 to 290 lie on the Extracellular side of the membrane; the sequence is MQWRARKTPEWHALKGQKSYYQEHGFIKILKQLFWMLD. Residues 291-311 form a helical membrane-spanning segment; sequence VVGVLLMGCSLGCILVPLTLA. At 312–323 the chain is on the cytoplasmic side; that stretch reads GGVKTTWNDSRL. A helical transmembrane segment spans residues 324 to 344; sequence IGPFVLGFVLIPILWIWEYRF. At 345 to 367 the chain is on the extracellular side; the sequence is ARDPILPYRLVKDRAVWSSMGIS. The chain crosses the membrane as a helical span at residues 368–388; that stretch reads FLIDFIYYMAADYLYTVMIVA. Residues 389–398 are Cytoplasmic-facing; the sequence is VNESVKSATR. The chain crosses the membrane as a helical span at residues 399–419; the sequence is IATLSSFVSTVASPFFALLVT. The Extracellular portion of the chain corresponds to 420–424; it reads RCTRL. The helical transmembrane segment at 425–445 threads the bilayer; that stretch reads KPFIMFGCALWMVAMGLLYHF. Topologically, residues 446 to 454 are cytoplasmic; the sequence is RGGSQSHSG. A helical membrane pass occupies residues 455–475; it reads IIGALCVWGVGTTLFTYPVTV. Residues 476–563 are Extracellular-facing; it reads SVQSAVSHEN…LMNAYKYVQR (88 aa). A helical membrane pass occupies residues 564 to 584; sequence LETIVALVFCVPLIAFSLCLR. Over 585–627 the chain is Cytoplasmic; that stretch reads DPKLTDTVAVEYIEDGEYVDTKDNDPILDWFEKLPSKFTFKRE.

This sequence belongs to the major facilitator superfamily.

It localises to the cell membrane. Its subcellular location is the endosome membrane. Involved in the transport of siderophore ferrichrome and so has a role in iron homeostasis. In Saccharomyces cerevisiae (strain ATCC 204508 / S288c) (Baker's yeast), this protein is Siderophore iron transporter ARN1 (ARN1).